A 261-amino-acid chain; its full sequence is Proteasome subunit alpha type-4 (261 aa).

Phosphoserine is present on residues Ser-13 and Ser-75. Lys-127 is modified (N6-acetyllysine). At Ser-173 the chain carries Phosphoserine. Lys-176 carries the N6-acetyllysine modification. The interval 240 to 261 (HEEEEAKAEREKKEKEQREKDK) is disordered.

This sequence belongs to the peptidase T1A family. As to quaternary structure, the 26S proteasome consists of a 20S proteasome core and two 19S regulatory subunits. The 20S proteasome core is a barrel-shaped complex made of 28 subunits that are arranged in four stacked rings. The two outer rings are each formed by seven alpha subunits, and the two inner rings are formed by seven beta subunits. The proteolytic activity is exerted by three beta-subunits PSMB5, PSMB6 and PSMB7. Ubiquitous.

It localises to the cytoplasm. The protein resides in the nucleus. Functionally, component of the 20S core proteasome complex involved in the proteolytic degradation of most intracellular proteins. This complex plays numerous essential roles within the cell by associating with different regulatory particles. Associated with two 19S regulatory particles, forms the 26S proteasome and thus participates in the ATP-dependent degradation of ubiquitinated proteins. The 26S proteasome plays a key role in the maintenance of protein homeostasis by removing misfolded or damaged proteins that could impair cellular functions, and by removing proteins whose functions are no longer required. Associated with the PA200 or PA28, the 20S proteasome mediates ubiquitin-independent protein degradation. This type of proteolysis is required in several pathways including spermatogenesis (20S-PA200 complex) or generation of a subset of MHC class I-presented antigenic peptides (20S-PA28 complex). The polypeptide is Proteasome subunit alpha type-4 (Psma4) (Rattus norvegicus (Rat)).